We begin with the raw amino-acid sequence, 313 residues long: Thymidylate synthase (313 aa).

The disordered stretch occupies residues 1 to 28 (MPVAGSELPRRPLPPAAQERDAEPRPPH). Residues 18–28 (QERDAEPRPPH) are compositionally biased toward basic and acidic residues. A dUMP-binding site is contributed by Arg-50. A Phosphoserine modification is found at Ser-114. DUMP-binding positions include 175 to 176 (RR), 195 to 196 (CH), 215 to 218 (RSGD), Asn-226, and 256 to 258 (HIY). Cys-195 functions as the Nucleophile in the catalytic mechanism. A (6R)-5,10-methylene-5,6,7,8-tetrahydrofolate-binding site is contributed by Asp-218. Glycyl lysine isopeptide (Lys-Gly) (interchain with G-Cter in SUMO2) cross-links involve residues Lys-287, Lys-292, and Lys-308. Ala-312 is a binding site for (6R)-5,10-methylene-5,6,7,8-tetrahydrofolate.

It belongs to the thymidylate synthase family. Homodimer.

It is found in the nucleus. Its subcellular location is the cytoplasm. The protein resides in the mitochondrion. The protein localises to the mitochondrion matrix. It localises to the mitochondrion inner membrane. The enzyme catalyses dUMP + (6R)-5,10-methylene-5,6,7,8-tetrahydrofolate = 7,8-dihydrofolate + dTMP. The protein operates within pyrimidine metabolism; dTTP biosynthesis. In terms of biological role, catalyzes the reductive methylation of 2'-deoxyuridine 5'-monophosphate (dUMP) to thymidine 5'-monophosphate (dTMP), using the cosubstrate, 5,10- methylenetetrahydrofolate (CH2H4folate) as a 1-carbon donor and reductant and contributes to the de novo mitochondrial thymidylate biosynthesis pathway. The chain is Thymidylate synthase from Homo sapiens (Human).